A 276-amino-acid polypeptide reads, in one-letter code: Secretagogin (276 aa).

6 consecutive EF-hand domains span residues 12-47 (LDAA…VLTK), 58-93 (NVWK…EDEN), 105-140 (DSSV…LFLH), 149-184 (KLEE…QENF), 197-232 (ERKR…MMEL), and 240-276 (VDLD…KINP). D71, S73, D75, H77, E82, D118, D120, S122, E129, D162, N164, D166, R168, D173, D210, S212, T214, E221, D254, N256, D258, K260, and E265 together coordinate Ca(2+).

It is found in the cytoplasm. The protein localises to the secreted. It localises to the cytoplasmic vesicle. Its subcellular location is the secretory vesicle membrane. In Sus scrofa (Pig), this protein is Secretagogin (SCGN).